The sequence spans 430 residues: Enolase (430 aa).

Glutamine 167 lines the (2R)-2-phosphoglycerate pocket. Glutamate 209 functions as the Proton donor in the catalytic mechanism. Mg(2+) is bound by residues aspartate 246, glutamate 287, and aspartate 314. (2R)-2-phosphoglycerate-binding residues include lysine 339, arginine 368, serine 369, and lysine 390. Lysine 339 acts as the Proton acceptor in catalysis.

It belongs to the enolase family. Mg(2+) is required as a cofactor.

Its subcellular location is the cytoplasm. It localises to the secreted. It is found in the cell surface. The enzyme catalyses (2R)-2-phosphoglycerate = phosphoenolpyruvate + H2O. It participates in carbohydrate degradation; glycolysis; pyruvate from D-glyceraldehyde 3-phosphate: step 4/5. In terms of biological role, catalyzes the reversible conversion of 2-phosphoglycerate (2-PG) into phosphoenolpyruvate (PEP). It is essential for the degradation of carbohydrates via glycolysis. The sequence is that of Enolase from Prochlorococcus marinus (strain MIT 9301).